A 631-amino-acid chain; its full sequence is ATP-dependent DNA helicase 2 subunit 1 (631 aa).

One can recognise a Ku domain in the interval 262–487; that stretch reads FYLGPNLSMS…VEFFQKIIKK (226 aa). Residues 550–570 form a disordered region; the sequence is AEPHKKRAAKSTTAGASGPKM.

The protein belongs to the ku70 family. In terms of assembly, heterodimer of a 70 kDa and a 80 kDa subunit.

The protein resides in the nucleus. Its subcellular location is the chromosome. The enzyme catalyses ATP + H2O = ADP + phosphate + H(+). Its function is as follows. Single-stranded DNA-dependent ATP-dependent helicase. Involved in non-homologous end joining (NHEJ) DNA double strand break repair. Sequence-specific DNA-binding protein that has a high affinity for a 31 bp sequence in the Yp1 gene. Site-specific DNA binding to 31 bp P element inverted repeats. The polypeptide is ATP-dependent DNA helicase 2 subunit 1 (Irbp) (Drosophila melanogaster (Fruit fly)).